We begin with the raw amino-acid sequence, 611 residues long: Calmegin (611 aa).

Positions 1–19 are cleaved as a signal peptide; sequence MRFQGVGLCLGLLFITVNA. At 20–471 the chain is on the lumenal side; that stretch reads DFMDDGVEVE…LVIAAEERPW (452 aa). Position 128 is an N6-acetyllysine (lysine 128). A disulfide bond links cysteine 151 and cysteine 185. The disordered stretch occupies residues 254–335; the sequence is LDDVVPPINP…KAEKPEDWSD (82 aa). Residues 265 to 284 are compositionally biased toward basic and acidic residues; that stretch reads REIDDPSDKKPEEWDDRAKI. Repeat copies occupy residues 267–280, 284–297, 303–316, 322–335, 339–352, 356–369, 370–383, and 384–397. Residues 317-350 form an interaction with PPIB region; the sequence is DEPKFIPNPKAEKPEDWSDDMDGEWEAPHIPNPA. A disulfide bond links cysteine 351 and cysteine 355. The helical transmembrane segment at 472-492 threads the bilayer; the sequence is LWLMYLVMAGLPVALVASFCW. Residues 493-611 are Cytoplasmic-facing; sequence PRKVKKKYED…SLRKRRVRKD (119 aa). The interval 517 to 611 is disordered; it reads AALEQEAEEE…SLRKRRVRKD (95 aa). Basic and acidic residues predominate over residues 526-584; the sequence is EKAPEKPEDVQEEKKPGEAEVVTVEKEVIGEPEEKSKEDRETLEGQEEVSKLSKSGSED. Residues serine 561, serine 578, serine 580, serine 582, serine 592, serine 595, and serine 602 each carry the phosphoserine modification. Positions 602 to 611 are enriched in basic residues; it reads SLRKRRVRKD.

It belongs to the calreticulin family. In terms of assembly, interacts with PDILT and PPIB. Interacts with ADAM2. Interacts with ADAM1A, ADAM1B and ADAM3; these are protein-coding genes in mouse but may be pseudogenes in other organisms. In terms of tissue distribution, detected in testis (at protein level). Detected in testis.

It is found in the endoplasmic reticulum membrane. Functionally, functions during spermatogenesis as a chaperone for a range of client proteins that are important for sperm adhesion onto the egg zona pellucida and for subsequent penetration of the zona pellucida. Required for normal sperm migration from the uterus into the oviduct. Required for normal male fertility. Binds calcium ions. The polypeptide is Calmegin (Clgn) (Mus musculus (Mouse)).